Consider the following 288-residue polypeptide: UTP--glucose-1-phosphate uridylyltransferase (288 aa).

Belongs to the UDPGP type 2 family.

It catalyses the reaction alpha-D-glucose 1-phosphate + UTP + H(+) = UDP-alpha-D-glucose + diphosphate. The protein operates within glycolipid metabolism; diglucosyl-diacylglycerol biosynthesis. Functionally, catalyzes the formation of UDP-glucose from glucose-1-phosphate and UTP. This is an intermediate step in the biosynthesis of diglucosyl-diacylglycerol (Glc2-DAG), i.e. the predominant glycolipid found in the S.aureus membrane, which is also used as a membrane anchor for lipoteichoic acid (LTA). The protein is UTP--glucose-1-phosphate uridylyltransferase (gtaB) of Staphylococcus aureus (strain MRSA252).